A 344-amino-acid polypeptide reads, in one-letter code: Arginase 2, chloroplastic/mitochondrial (344 aa).

Residues 1-26 (MWKIGQRGVPYFQRLIAAPFTTLRSL) constitute a chloroplast and mitochondrion transit peptide. Mn(2+) contacts are provided by His163, Asp187, His189, and Asp191. Substrate-binding positions include 189–193 (HPDIY), 197–199 (EGN), and Asn228. Mn(2+) is bound by residues Asp272 and Asp274. Glu315 serves as a coordination point for substrate.

This sequence belongs to the arginase family. Mn(2+) serves as cofactor. As to expression, expressed in vasculature of roots, root tips, leaves and cotyledons.

The protein localises to the mitochondrion. The protein resides in the plastid. It localises to the chloroplast. It carries out the reaction L-arginine + H2O = urea + L-ornithine. It catalyses the reaction agmatine + H2O = urea + putrescine. The protein operates within nitrogen metabolism; urea cycle; L-ornithine and urea from L-arginine: step 1/1. Its pathway is amine and polyamine biosynthesis; putrescine biosynthesis via agmatine pathway; putrescine from agmatine: step 1/1. Its function is as follows. Catalyzes the hydrolysis of L-arginine to urea and L-ornithine. The latter can be utilized in the urea cycle or as a precursor for the synthesis of both polyamines and proline. Possesses agmatinase activity. Catalyzes the formation of putrescine from agmatine. This is Arginase 2, chloroplastic/mitochondrial (ARGAH2) from Arabidopsis thaliana (Mouse-ear cress).